The following is a 231-amino-acid chain: Cytochrome c oxidase assembly factor 7 (231 aa).

Position 2 is an N-acetylalanine (alanine 2). Sel1-like repeat units follow at residues 34–66 (PEGC…EKYG), 68–104 (GDSC…EKPG), 108–146 (VESC…DGGY), 147–183 (AASC…DLGH), and 184–219 (VWAC…QLHK).

It belongs to the hcp beta-lactamase family. In terms of assembly, interacts with CHCHD4/MIA40 through transient intermolecular disulfide bonds.

The protein resides in the mitochondrion intermembrane space. Required for assembly of mitochondrial respiratory chain complex I and complex IV. This Mus musculus (Mouse) protein is Cytochrome c oxidase assembly factor 7 (Coa7).